The primary structure comprises 325 residues: 5-dehydro-2-deoxygluconokinase (325 aa).

This sequence belongs to the carbohydrate kinase PfkB family.

It catalyses the reaction 5-dehydro-2-deoxy-D-gluconate + ATP = 6-phospho-5-dehydro-2-deoxy-D-gluconate + ADP + H(+). It participates in polyol metabolism; myo-inositol degradation into acetyl-CoA; acetyl-CoA from myo-inositol: step 5/7. Its function is as follows. Catalyzes the phosphorylation of 5-dehydro-2-deoxy-D-gluconate (2-deoxy-5-keto-D-gluconate or DKG) to 6-phospho-5-dehydro-2-deoxy-D-gluconate (DKGP). This is 5-dehydro-2-deoxygluconokinase from Listeria monocytogenes serotype 4b (strain CLIP80459).